Consider the following 167-residue polypeptide: UPF0303 protein mlr5144 (167 aa).

This sequence belongs to the UPF0303 family.

The chain is UPF0303 protein mlr5144 from Mesorhizobium japonicum (strain LMG 29417 / CECT 9101 / MAFF 303099) (Mesorhizobium loti (strain MAFF 303099)).